A 130-amino-acid polypeptide reads, in one-letter code: MKRRTARERAMQALYQMDITGELEPKIAVENTLDEGEETNEFLESLVVGFVENKEVIDEAIRQNLKKWKLERISIVDRSILRVAVYEMKYMEEIPHNVTINEAIEIAKTFGDEESRRFINGVLSNIKDTL.

The protein belongs to the NusB family.

Its function is as follows. Involved in transcription antitermination. Required for transcription of ribosomal RNA (rRNA) genes. Binds specifically to the boxA antiterminator sequence of the ribosomal RNA (rrn) operons. The protein is Transcription antitermination protein NusB of Bacillus cereus (strain ATCC 10987 / NRS 248).